We begin with the raw amino-acid sequence, 111 residues long: Nucleoid-associated protein VF_1686 (111 aa).

Disordered regions lie at residues 1–23 (MFGG…DRMQ) and 89–111 (TQKE…KMPF).

This sequence belongs to the YbaB/EbfC family. Homodimer.

The protein resides in the cytoplasm. It localises to the nucleoid. Binds to DNA and alters its conformation. May be involved in regulation of gene expression, nucleoid organization and DNA protection. The sequence is that of Nucleoid-associated protein VF_1686 from Aliivibrio fischeri (strain ATCC 700601 / ES114) (Vibrio fischeri).